Here is a 404-residue protein sequence, read N- to C-terminus: Argininosuccinate synthase (404 aa).

Residues 11–19 (AYSGGLDTS) and Ala40 contribute to the ATP site. L-citrulline is bound by residues Tyr92 and Ser97. Residue Gly122 coordinates ATP. 3 residues coordinate L-aspartate: Thr124, Asn128, and Asp129. Asn128 contributes to the L-citrulline binding site. Positions 132, 181, 190, 266, and 278 each coordinate L-citrulline.

The protein belongs to the argininosuccinate synthase family. Type 1 subfamily. As to quaternary structure, homotetramer.

Its subcellular location is the cytoplasm. The catalysed reaction is L-citrulline + L-aspartate + ATP = 2-(N(omega)-L-arginino)succinate + AMP + diphosphate + H(+). Its pathway is amino-acid biosynthesis; L-arginine biosynthesis; L-arginine from L-ornithine and carbamoyl phosphate: step 2/3. The chain is Argininosuccinate synthase from Moritella abyssi.